Consider the following 355-residue polypeptide: UDP-N-acetylglucosamine--N-acetylmuramyl-(pentapeptide) pyrophosphoryl-undecaprenol N-acetylglucosamine transferase (355 aa).

UDP-N-acetyl-alpha-D-glucosamine-binding positions include 13 to 15 (TGG), asparagine 125, arginine 162, serine 190, isoleucine 244, and glutamine 289.

It belongs to the glycosyltransferase 28 family. MurG subfamily.

It is found in the cell inner membrane. The catalysed reaction is di-trans,octa-cis-undecaprenyl diphospho-N-acetyl-alpha-D-muramoyl-L-alanyl-D-glutamyl-meso-2,6-diaminopimeloyl-D-alanyl-D-alanine + UDP-N-acetyl-alpha-D-glucosamine = di-trans,octa-cis-undecaprenyl diphospho-[N-acetyl-alpha-D-glucosaminyl-(1-&gt;4)]-N-acetyl-alpha-D-muramoyl-L-alanyl-D-glutamyl-meso-2,6-diaminopimeloyl-D-alanyl-D-alanine + UDP + H(+). Its pathway is cell wall biogenesis; peptidoglycan biosynthesis. Its function is as follows. Cell wall formation. Catalyzes the transfer of a GlcNAc subunit on undecaprenyl-pyrophosphoryl-MurNAc-pentapeptide (lipid intermediate I) to form undecaprenyl-pyrophosphoryl-MurNAc-(pentapeptide)GlcNAc (lipid intermediate II). In Neisseria meningitidis serogroup B (strain ATCC BAA-335 / MC58), this protein is UDP-N-acetylglucosamine--N-acetylmuramyl-(pentapeptide) pyrophosphoryl-undecaprenol N-acetylglucosamine transferase.